Reading from the N-terminus, the 144-residue chain is F420-non-reducing hydrogenase vhc iron-sulfur subunit D (144 aa).

It belongs to the MvhD/VhuD family. As to quaternary structure, the F420-non-reducing hydrogenase vhc is composed of three subunits; VhcA, VhcD and VhcG. [2Fe-2S] cluster serves as cofactor.

This Methanococcus voltae protein is F420-non-reducing hydrogenase vhc iron-sulfur subunit D (vhcD).